A 104-amino-acid chain; its full sequence is Large ribosomal subunit protein uL24 (104 aa).

It belongs to the universal ribosomal protein uL24 family. In terms of assembly, part of the 50S ribosomal subunit.

Its function is as follows. One of two assembly initiator proteins, it binds directly to the 5'-end of the 23S rRNA, where it nucleates assembly of the 50S subunit. Functionally, one of the proteins that surrounds the polypeptide exit tunnel on the outside of the subunit. The protein is Large ribosomal subunit protein uL24 of Escherichia coli O81 (strain ED1a).